We begin with the raw amino-acid sequence, 171 residues long: Small ribosomal subunit protein uS5 (171 aa).

In terms of domain architecture, S5 DRBM spans 12–75; sequence LKEKLISVNR…EKARRNMIQV (64 aa).

This sequence belongs to the universal ribosomal protein uS5 family. In terms of assembly, part of the 30S ribosomal subunit. Contacts proteins S4 and S8.

In terms of biological role, with S4 and S12 plays an important role in translational accuracy. Functionally, located at the back of the 30S subunit body where it stabilizes the conformation of the head with respect to the body. This Buchnera aphidicola subsp. Baizongia pistaciae (strain Bp) protein is Small ribosomal subunit protein uS5.